Consider the following 188-residue polypeptide: Actin-related protein 2/3 complex subunit 3 (188 aa).

It belongs to the ARPC3 family. Component of the Arp2/3 complex.

Its subcellular location is the cytoplasm. It localises to the cytoskeleton. Functionally, functions as a component of the Arp2/3 complex which is involved in regulation of actin polymerization and together with an activating nucleation-promoting factor (NPF) mediates the formation of branched actin networks. The polypeptide is Actin-related protein 2/3 complex subunit 3 (Entamoeba histolytica (strain ATCC 30459 / HM-1:IMSS / ABRM)).